A 460-amino-acid chain; its full sequence is NADH-ubiquinone oxidoreductase chain 4 (460 aa).

13 consecutive transmembrane segments (helical) span residues 20–42, 61–81, 94–113, 117–139, 148–168, 195–215, 225–245, 258–278, 285–304, 308–330, 351–371, 394–414, and 436–456; these read AKWL…LSWL, PLST…ILAS, RAYI…AFGA, IMFY…RWGN, TYFL…LLLM, LWWA…GVHL, PIAG…YGMM, LAYP…SICL, SLIA…GILI, WGFT…LFCL, MILP…LALP, LILT…LFLM, and LLII…ELMW.

Belongs to the complex I subunit 4 family.

The protein localises to the mitochondrion membrane. The enzyme catalyses a ubiquinone + NADH + 5 H(+)(in) = a ubiquinol + NAD(+) + 4 H(+)(out). Functionally, core subunit of the mitochondrial membrane respiratory chain NADH dehydrogenase (Complex I) that is believed to belong to the minimal assembly required for catalysis. Complex I functions in the transfer of electrons from NADH to the respiratory chain. The immediate electron acceptor for the enzyme is believed to be ubiquinone. This is NADH-ubiquinone oxidoreductase chain 4 (MT-ND4) from Oncorhynchus mykiss (Rainbow trout).